Consider the following 262-residue polypeptide: 3-methyl-2-oxobutanoate hydroxymethyltransferase (262 aa).

Residues Asp-44 and Asp-83 each contribute to the Mg(2+) site. 3-methyl-2-oxobutanoate contacts are provided by residues 44-45 (DS), Asp-83, and Lys-112. Mg(2+) is bound at residue Glu-114. Glu-181 functions as the Proton acceptor in the catalytic mechanism.

It belongs to the PanB family. Homodecamer; pentamer of dimers. Mg(2+) is required as a cofactor.

The protein localises to the cytoplasm. The catalysed reaction is 3-methyl-2-oxobutanoate + (6R)-5,10-methylene-5,6,7,8-tetrahydrofolate + H2O = 2-dehydropantoate + (6S)-5,6,7,8-tetrahydrofolate. It functions in the pathway cofactor biosynthesis; (R)-pantothenate biosynthesis; (R)-pantoate from 3-methyl-2-oxobutanoate: step 1/2. In terms of biological role, catalyzes the reversible reaction in which hydroxymethyl group from 5,10-methylenetetrahydrofolate is transferred onto alpha-ketoisovalerate to form ketopantoate. The chain is 3-methyl-2-oxobutanoate hydroxymethyltransferase from Thiobacillus denitrificans (strain ATCC 25259 / T1).